Here is a 350-residue protein sequence, read N- to C-terminus: Cobalt-precorrin-5B C(1)-methyltransferase (350 aa).

It belongs to the CbiD family.

The enzyme catalyses Co-precorrin-5B + S-adenosyl-L-methionine = Co-precorrin-6A + S-adenosyl-L-homocysteine. The protein operates within cofactor biosynthesis; adenosylcobalamin biosynthesis; cob(II)yrinate a,c-diamide from sirohydrochlorin (anaerobic route): step 6/10. In terms of biological role, catalyzes the methylation of C-1 in cobalt-precorrin-5B to form cobalt-precorrin-6A. The chain is Cobalt-precorrin-5B C(1)-methyltransferase from Syntrophotalea carbinolica (strain DSM 2380 / NBRC 103641 / GraBd1) (Pelobacter carbinolicus).